Consider the following 215-residue polypeptide: Probable phosphoglycerate mutase GpmB (215 aa).

Substrate is bound by residues 8-15 (RHGETLWN), 21-22 (QG), arginine 58, arginine 60, 82-85 (ELNM), and 151-152 (GM). Histidine 9 (tele-phosphohistidine intermediate) is an active-site residue. Residue glutamate 82 is the Proton donor/acceptor of the active site.

Belongs to the phosphoglycerate mutase family. GpmB subfamily.

It catalyses the reaction (2R)-2-phosphoglycerate = (2R)-3-phosphoglycerate. It participates in carbohydrate degradation; glycolysis; pyruvate from D-glyceraldehyde 3-phosphate: step 3/5. This is Probable phosphoglycerate mutase GpmB from Erwinia tasmaniensis (strain DSM 17950 / CFBP 7177 / CIP 109463 / NCPPB 4357 / Et1/99).